A 100-amino-acid polypeptide reads, in one-letter code: Small ribosomal subunit protein uS14c (100 aa).

It belongs to the universal ribosomal protein uS14 family. In terms of assembly, part of the 30S ribosomal subunit.

The protein resides in the plastid. Binds 16S rRNA, required for the assembly of 30S particles. The chain is Small ribosomal subunit protein uS14c from Aneura mirabilis (Parasitic liverwort).